Consider the following 315-residue polypeptide: Pantothenate synthetase (315 aa).

ATP is bound at residue 45 to 52 (MGALHEGH). Catalysis depends on histidine 52, which acts as the Proton donor. Glutamine 77 is a binding site for (R)-pantoate. Glutamine 77 serves as a coordination point for beta-alanine. 163-166 (GEKD) lines the ATP pocket. Glutamine 169 is a binding site for (R)-pantoate. ATP is bound by residues valine 192 and 200–203 (MSSR).

Belongs to the pantothenate synthetase family. As to quaternary structure, homodimer.

The protein resides in the cytoplasm. It catalyses the reaction (R)-pantoate + beta-alanine + ATP = (R)-pantothenate + AMP + diphosphate + H(+). It functions in the pathway cofactor biosynthesis; (R)-pantothenate biosynthesis; (R)-pantothenate from (R)-pantoate and beta-alanine: step 1/1. In terms of biological role, catalyzes the condensation of pantoate with beta-alanine in an ATP-dependent reaction via a pantoyl-adenylate intermediate. The polypeptide is Pantothenate synthetase (Mycobacterium ulcerans (strain Agy99)).